Reading from the N-terminus, the 429-residue chain is Phosphoribosylamine--glycine ligase (429 aa).

In terms of domain architecture, ATP-grasp spans 109 to 316; sequence KDFLARHQIP…LVELCLAAID (208 aa). 135-196 serves as a coordination point for ATP; it reads VREQGAPIVV…EEFLDGEEAS (62 aa). A disordered region spans residues 212–234; the sequence is SQDHKRVGDKDTGPNTGGMGAYS. A compositionally biased stretch (basic and acidic residues) spans 213 to 223; the sequence is QDHKRVGDKDT. Positions 286 and 288 each coordinate Mg(2+).

The protein belongs to the GARS family. The cofactor is Mg(2+). Requires Mn(2+) as cofactor.

The catalysed reaction is 5-phospho-beta-D-ribosylamine + glycine + ATP = N(1)-(5-phospho-beta-D-ribosyl)glycinamide + ADP + phosphate + H(+). Its pathway is purine metabolism; IMP biosynthesis via de novo pathway; N(1)-(5-phospho-D-ribosyl)glycinamide from 5-phospho-alpha-D-ribose 1-diphosphate: step 2/2. This is Phosphoribosylamine--glycine ligase from Vibrio vulnificus (strain CMCP6).